We begin with the raw amino-acid sequence, 269 residues long: Formamidopyrimidine-DNA glycosylase (269 aa).

Pro-2 serves as the catalytic Schiff-base intermediate with DNA. The active-site Proton donor is the Glu-3. The active-site Proton donor; for beta-elimination activity is Lys-57. Residues His-90, Arg-109, and Lys-150 each coordinate DNA. The segment at 235 to 269 adopts an FPG-type zinc-finger fold; the sequence is QVYGRKGEPCRVCGTPIVATKHAQRATFYCRHCQK. Residue Arg-259 is the Proton donor; for delta-elimination activity of the active site.

This sequence belongs to the FPG family. In terms of assembly, monomer. Zn(2+) is required as a cofactor.

It catalyses the reaction Hydrolysis of DNA containing ring-opened 7-methylguanine residues, releasing 2,6-diamino-4-hydroxy-5-(N-methyl)formamidopyrimidine.. The enzyme catalyses 2'-deoxyribonucleotide-(2'-deoxyribose 5'-phosphate)-2'-deoxyribonucleotide-DNA = a 3'-end 2'-deoxyribonucleotide-(2,3-dehydro-2,3-deoxyribose 5'-phosphate)-DNA + a 5'-end 5'-phospho-2'-deoxyribonucleoside-DNA + H(+). Involved in base excision repair of DNA damaged by oxidation or by mutagenic agents. Acts as a DNA glycosylase that recognizes and removes damaged bases. Has a preference for oxidized purines, such as 7,8-dihydro-8-oxoguanine (8-oxoG). Has AP (apurinic/apyrimidinic) lyase activity and introduces nicks in the DNA strand. Cleaves the DNA backbone by beta-delta elimination to generate a single-strand break at the site of the removed base with both 3'- and 5'-phosphates. This Salmonella choleraesuis (strain SC-B67) protein is Formamidopyrimidine-DNA glycosylase.